The chain runs to 98 residues: NADH-ubiquinone oxidoreductase chain 4L (98 aa).

Helical transmembrane passes span 1–21 (MMSINLNLIMAFLLALAGVLI), 28–48 (STLLCLEGMMLSLFILMALLI), and 59–79 (APLILLVFSACEAGVGLALLV).

Belongs to the complex I subunit 4L family. Core subunit of respiratory chain NADH dehydrogenase (Complex I) which is composed of 45 different subunits.

It is found in the mitochondrion inner membrane. The catalysed reaction is a ubiquinone + NADH + 5 H(+)(in) = a ubiquinol + NAD(+) + 4 H(+)(out). Its function is as follows. Core subunit of the mitochondrial membrane respiratory chain NADH dehydrogenase (Complex I) which catalyzes electron transfer from NADH through the respiratory chain, using ubiquinone as an electron acceptor. Part of the enzyme membrane arm which is embedded in the lipid bilayer and involved in proton translocation. In Lagorchestes hirsutus (Rufous hare-wallaby), this protein is NADH-ubiquinone oxidoreductase chain 4L (MT-ND4L).